The primary structure comprises 184 residues: Photosystem I assembly protein Ycf4 (184 aa).

2 consecutive transmembrane segments (helical) span residues 19-39 and 57-77; these read ISNF…LLVG and IVFF…LFIS.

Belongs to the Ycf4 family.

It localises to the plastid. The protein resides in the chloroplast thylakoid membrane. In terms of biological role, seems to be required for the assembly of the photosystem I complex. This Atropa belladonna (Belladonna) protein is Photosystem I assembly protein Ycf4.